We begin with the raw amino-acid sequence, 91 residues long: Putative 26S proteasome complex subunit sem-1 (91 aa).

Residues 1–73 are disordered; sequence MASTQPKNDA…SWDDDDTSDD (73 aa). A compositionally biased stretch (basic and acidic residues) spans 8–28; sequence NDAKSTEPKPEQPVTEKKTAV. Acidic residues-rich tracts occupy residues 29–48 and 63–72; these read LEED…AEDT and ESWDDDDTSD.

Belongs to the DSS1/SEM1 family. As to quaternary structure, part of the 26S proteasome.

Functionally, subunit of the 26S proteasome which plays a role in ubiquitin-dependent proteolysis. The polypeptide is Putative 26S proteasome complex subunit sem-1 (sem-1) (Neurospora crassa (strain ATCC 24698 / 74-OR23-1A / CBS 708.71 / DSM 1257 / FGSC 987)).